The following is a 553-amino-acid chain: Transcription factor 7-like 1 (553 aa).

Over residues 1 to 11 the composition is skewed to gly residues; it reads MPQLNSGGGDE. The interaction with CTNNB1 stretch occupies residues 1-61; sequence MPQLNSGGGD…SENHSSDSDS (61 aa). Disordered regions lie at residues 1–77, 183–213, and 392–474; these read MPQL…EKPR, GTPP…PYYP, and SARD…LTTK. Basic and acidic residues-rich tracts occupy residues 17-32 and 52-77; these read ELIR…EKSP and SENH…EKPR. The interval 109 to 312 is interaction with AES and TLE4; the sequence is LGGHYLPNGA…SPNLITKPSV (204 aa). Residues 324–392 constitute a DNA-binding region (HMG box); that stretch reads IKKPLNAFML…LHSQLYPTWS (69 aa). Basic and acidic residues predominate over residues 407–416; the sequence is KQSPEMEITK. The interaction with CTBP stretch occupies residues 408 to 553; that stretch reads QSPEMEITKT…PLSLVTKSSD (146 aa). Residues 444-463 are compositionally biased toward low complexity; sequence SPATPSAALASPAAPAATHS. The segment covering 464–473 has biased composition (polar residues); that stretch reads EQAQPLSLTT.

The protein belongs to the TCF/LEF family. In terms of assembly, interacts with csnk1e, ctnnb1, ctbp, dact1 and gsk3b. May interact with ase and tle4. In terms of processing, phosphorylated. Phosphorylation by csnk1e promotes binding to ctnnb1 while phosphorylation by gsk3b may reverse this effect.

The protein localises to the nucleus. Participates in the Wnt signaling pathway. Binds to DNA and acts as a repressor in the absence of ctnnb1, and as an activator in its presence. Required early in development for the establishment of the dorsal body axis in response to maternal Wnt signaling. The chain is Transcription factor 7-like 1 (tcf7l1) from Xenopus tropicalis (Western clawed frog).